A 140-amino-acid chain; its full sequence is ATP synthase epsilon chain (140 aa).

It belongs to the ATPase epsilon chain family. F-type ATPases have 2 components, CF(1) - the catalytic core - and CF(0) - the membrane proton channel. CF(1) has five subunits: alpha(3), beta(3), gamma(1), delta(1), epsilon(1). CF(0) has three main subunits: a, b and c.

The protein localises to the cell inner membrane. In terms of biological role, produces ATP from ADP in the presence of a proton gradient across the membrane. The chain is ATP synthase epsilon chain from Xanthomonas oryzae pv. oryzae (strain PXO99A).